The primary structure comprises 184 residues: Cysteine proteinase inhibitor 3 (184 aa).

A signal peptide spans M1–G35. Positions G48–G134 constitute a Cystatin domain. The short motif at Q90 to G94 is the Secondary area of contact element. Residues S138–N165 form a disordered region.

The protein belongs to the cystatin family. Phytocystatin subfamily.

Its subcellular location is the secreted. Specific inhibitor of cysteine proteinases. Probably involved in the regulation of endogenous processes and in defense against pests and pathogens. The protein is Cysteine proteinase inhibitor 3 of Oryza sativa subsp. japonica (Rice).